Here is a 242-residue protein sequence, read N- to C-terminus: Probable septum site-determining protein MinC (242 aa).

Belongs to the MinC family. As to quaternary structure, interacts with MinD and FtsZ.

Cell division inhibitor that blocks the formation of polar Z ring septums. Rapidly oscillates between the poles of the cell to destabilize FtsZ filaments that have formed before they mature into polar Z rings. Prevents FtsZ polymerization. The protein is Probable septum site-determining protein MinC of Thioalkalivibrio sulfidiphilus (strain HL-EbGR7).